Consider the following 2034-residue polypeptide: Sperm vesicle fusion protein fer-1 (2034 aa).

A disordered region spans residues 1-80 (MTVKEKLLKV…GGSDIELLPD (80 aa)). Topologically, residues 1-1998 (MTVKEKLLKV…CIKYFWHYYG (1998 aa)) are cytoplasmic. Positions 66–79 (ELSDDGGSDIELLP) are enriched in acidic residues. C2 domains follow at residues 229 to 367 (RIDE…YLPT), 954 to 1082 (DSED…PQWF), 1120 to 1246 (YKER…KSDH), and 1363 to 1484 (KKGK…ATGG). The interval 1563–1619 (QKAGKENFSDGSDQQNEDVSDGSWDEEDLEREKEKLKWEKHRSKGKPLKKVTTEKAE) is disordered. Positions 1577 to 1591 (QNEDVSDGSWDEEDL) are enriched in acidic residues. The segment covering 1600–1611 (WEKHRSKGKPLK) has biased composition (basic residues). The 148-residue stretch at 1684–1831 (EYGAIPAPFN…EGIGSPSDVG (148 aa)) folds into the C2 5 domain. Residues 1953 to 1972 (QEPAGKKRSEPNHSPFLEKP) are disordered. Residues 1999-2019 (LQILLWLIIIVILILTIFVLL) form a helical membrane-spanning segment. Topologically, residues 2020–2034 (HTWPTILAEIIKAIF) are extracellular.

Belongs to the ferlin family. As to expression, exclusively expressed in the testis.

It localises to the membrane. Its function is as follows. Required for the fusion of the membranous organelles (MOs) with the plasma membrane, a process essential in spermiogenesis. This chain is Sperm vesicle fusion protein fer-1 (fer-1), found in Caenorhabditis elegans.